Reading from the N-terminus, the 403-residue chain is DNA primase DnaG (403 aa).

The Toprim domain maps to Asp172 to Pro248. Mg(2+) contacts are provided by Glu178, Asp222, and Asp224. Positions Ala279–Ala300 are disordered.

The protein belongs to the archaeal DnaG primase family. In terms of assembly, forms a ternary complex with MCM helicase and DNA. Component of the archaeal exosome complex. It depends on Mg(2+) as a cofactor.

The enzyme catalyses ssDNA + n NTP = ssDNA/pppN(pN)n-1 hybrid + (n-1) diphosphate.. RNA polymerase that catalyzes the synthesis of short RNA molecules used as primers for DNA polymerase during DNA replication. Also part of the exosome, which is a complex involved in RNA degradation. Acts as a poly(A)-binding protein that enhances the interaction between heteromeric, adenine-rich transcripts and the exosome. The protein is DNA primase DnaG of Pyrobaculum neutrophilum (strain DSM 2338 / JCM 9278 / NBRC 100436 / V24Sta) (Thermoproteus neutrophilus).